A 350-amino-acid polypeptide reads, in one-letter code: tRNA uridine(34) hydroxylase (350 aa).

The Rhodanese domain maps to 146–240; it reads DDPDAVFIDM…YARRAREQGL (95 aa). The Cysteine persulfide intermediate role is filled by Cys-200. Residues 319-328 show a composition bias toward basic and acidic residues; the sequence is RRRRAGRENG. The tract at residues 319–350 is disordered; the sequence is RRRRAGRENGNKIFNKSRGRLNSKLSIPDPAE.

Belongs to the TrhO family.

The enzyme catalyses uridine(34) in tRNA + AH2 + O2 = 5-hydroxyuridine(34) in tRNA + A + H2O. Catalyzes oxygen-dependent 5-hydroxyuridine (ho5U) modification at position 34 in tRNAs. This chain is tRNA uridine(34) hydroxylase, found in Salmonella schwarzengrund (strain CVM19633).